The following is a 235-amino-acid chain: MIELHQKRLSAPKTYKIPRKVSKWVVKPSPGPHNKEAIPLLVLVRDFLELADTGREARRIISAGEILVDGVVRKDYKFPVGLFDVVTIPKLEKSYRILFDEKGRYIPKEVEDADLKLYKITNKTLVRGGKVQLNLFDGTNILGSNDYKTKDSILLRIPEKEVVDHLKFEEGALVMITGGTHAGEIGRIKSYKIVRSSAPNLVTVEGEERDITTIEDYVFVVGKKDSDKPVIDLGV.

The region spanning 38–101 is the S4 RNA-binding domain; that stretch reads IPLLVLVRDF…EKSYRILFDE (64 aa).

The protein belongs to the eukaryotic ribosomal protein eS4 family.

The polypeptide is Small ribosomal subunit protein eS4 (rps4e) (Archaeoglobus fulgidus (strain ATCC 49558 / DSM 4304 / JCM 9628 / NBRC 100126 / VC-16)).